We begin with the raw amino-acid sequence, 323 residues long: MVFSSLPVNQFDSQNWQQQGNQHQLECVTTDQNPNNYLRQLSSPPTSQVAGSSQARVNSMVERARIAKVPLPEAALNCPRCDSTNTKFCYFNNYSLTQPRHFCKTCRRYWTRGGSLRNVPVGGGFRRNKRSKSRSKSTVVVSTDNTTSTSSLTSRPSYSNPSKFHSYGQIPEFNSNLPILPPLQSLGDYNSSNTGLDFGGTQISNMISGMSSSGGILDAWRIPPSQQAQQFPFLINTTGLVQSSNALYPLLEGGVSATQTRNVKAEENDQDRGRDGDGVNNLSRNFLGNININSGRNEEYTSWGGNSSWTGFTSNNSTGHLSF.

Residues 76 to 130 (LNCPRCDSTNTKFCYFNNYSLTQPRHFCKTCRRYWTRGGSLRNVPVGGGFRRNKR) form a Dof-type zinc finger. Zn(2+)-binding residues include cysteine 78, cysteine 81, cysteine 103, and cysteine 106. Disordered stretches follow at residues 121–160 (VGGG…SYSN) and 304–323 (GGNS…HLSF). Positions 126–135 (RRNKRSKSRS) are enriched in basic residues. Residues 136-159 (KSTVVVSTDNTTSTSSLTSRPSYS) are compositionally biased toward low complexity.

Interacts with OBF4. In terms of tissue distribution, predominantly expressed in roots.

The protein resides in the nucleus. In terms of biological role, transcription factor that binds specifically to a 5'-AA[AG]G-3' consensus core sequence. Enhances the DNA binding of OBF transcription factors to OCS elements. The polypeptide is Dof zinc finger protein DOF3.6 (DOF3.6) (Arabidopsis thaliana (Mouse-ear cress)).